Consider the following 164-residue polypeptide: R-phycoerythrin alpha chain (164 aa).

(2R,3E)-phycoerythrobilin contacts are provided by Asn47, Lys81, Cys82, Arg84, His88, Arg137, Cys139, and Arg142.

Belongs to the phycobiliprotein family. Heterododecamer of 6 alpha and 6 beta chains. The basic functional unit of phycobiliproteins is a ring-shaped hexamer formed from two back-to-back trimers contacting via the alpha chain subunits. The trimers are composed of alpha/beta subunit heterodimers arranged around a three-fold axis of symmetry. The phycoerythrins also contain a gamma subunit which is located in the center of the hexamer. In terms of processing, contains two covalently linked phycoerythrobilin chromophores. In PubMed:8876649 the authors refer to the bilins as phycoerythrobilins. In the PDB entries, the bilins are named as phycocyanobilins although the modeled compounds correspond to phycoerythrobilins.

It localises to the plastid. The protein resides in the chloroplast thylakoid membrane. Light-harvesting photosynthetic tetrapyrrole chromophore-protein from the phycobiliprotein complex. The chain is R-phycoerythrin alpha chain (cpeA) from Polysiphonia urceolata (Red alga).